Consider the following 343-residue polypeptide: Holliday junction branch migration complex subunit RuvB (343 aa).

Residues 1–185 (MEQEDFNIRE…FGINLHLEYY (185 aa)) form a large ATPase domain (RuvB-L) region. Residues Leu-24, Arg-25, Gly-66, Lys-69, Thr-70, Thr-71, 132–134 (EDY), Arg-175, Tyr-185, and Arg-222 each bind ATP. Residue Thr-70 participates in Mg(2+) binding. The segment at 186-256 (DDDILSNIIR…IAQFALEALN (71 aa)) is small ATPAse domain (RuvB-S). The segment at 259-343 (KYGLDEIDNK…YSSQKTLFND (85 aa)) is head domain (RuvB-H). Positions 314 and 319 each coordinate DNA.

The protein belongs to the RuvB family. Homohexamer. Forms an RuvA(8)-RuvB(12)-Holliday junction (HJ) complex. HJ DNA is sandwiched between 2 RuvA tetramers; dsDNA enters through RuvA and exits via RuvB. An RuvB hexamer assembles on each DNA strand where it exits the tetramer. Each RuvB hexamer is contacted by two RuvA subunits (via domain III) on 2 adjacent RuvB subunits; this complex drives branch migration. In the full resolvosome a probable DNA-RuvA(4)-RuvB(12)-RuvC(2) complex forms which resolves the HJ.

The protein resides in the cytoplasm. The catalysed reaction is ATP + H2O = ADP + phosphate + H(+). Its function is as follows. The RuvA-RuvB-RuvC complex processes Holliday junction (HJ) DNA during genetic recombination and DNA repair, while the RuvA-RuvB complex plays an important role in the rescue of blocked DNA replication forks via replication fork reversal (RFR). RuvA specifically binds to HJ cruciform DNA, conferring on it an open structure. The RuvB hexamer acts as an ATP-dependent pump, pulling dsDNA into and through the RuvAB complex. RuvB forms 2 homohexamers on either side of HJ DNA bound by 1 or 2 RuvA tetramers; 4 subunits per hexamer contact DNA at a time. Coordinated motions by a converter formed by DNA-disengaged RuvB subunits stimulates ATP hydrolysis and nucleotide exchange. Immobilization of the converter enables RuvB to convert the ATP-contained energy into a lever motion, pulling 2 nucleotides of DNA out of the RuvA tetramer per ATP hydrolyzed, thus driving DNA branch migration. The RuvB motors rotate together with the DNA substrate, which together with the progressing nucleotide cycle form the mechanistic basis for DNA recombination by continuous HJ branch migration. Branch migration allows RuvC to scan DNA until it finds its consensus sequence, where it cleaves and resolves cruciform DNA. This Bacteroides thetaiotaomicron (strain ATCC 29148 / DSM 2079 / JCM 5827 / CCUG 10774 / NCTC 10582 / VPI-5482 / E50) protein is Holliday junction branch migration complex subunit RuvB.